A 457-amino-acid polypeptide reads, in one-letter code: MAKKKTKFMCQECGYESAKWMGKCPGCQSWNSMVEEFTEVKAKSSRSYVTSGAGIAKPQPITKVEREQEPRIDTSMKELNRVLGGGIVPGSLVLVGGDPGIGKSTLLLQLSARLADLKQRVLYISGEESVKQTKIRSDRLGVLSDHLYVLAETDMEKIEQAIGEVDPTLVIIDSIQTVYQDEITSAPGSVAQVRECTASFMRIAKTTGVAIFIVGHVTKQGAIAGPKLLEHMVDSVLYFEGERHHTYRILRAVKNRFGSTNEMGIFEMKESGLEEVANPSEIFLEDRSSGVAGSTVVASMEGTRPVLVELQALISPTSFGNPRRMATGVDHNRISLLMAVLEKRVGMLLQNQDAYVNVAGGVRLDEPAIDLGIAVSIASSFRNQHTNPHEVVIGEIGLTGEVRRVSRIDQRVNEAAKLGFKRVIIPDKNLGGWTIPSTIEVIGVSTVQDALEVTLGR.

The segment at 10-27 adopts a C4-type zinc-finger fold; that stretch reads CQECGYESAKWMGKCPGC. 97-104 provides a ligand contact to ATP; sequence GDPGIGKS. Residues 254 to 258 carry the RadA KNRFG motif motif; it reads KNRFG. Positions 353–457 are lon-protease-like; the sequence is DAYVNVAGGV…QDALEVTLGR (105 aa).

This sequence belongs to the RecA family. RadA subfamily.

Functionally, DNA-dependent ATPase involved in processing of recombination intermediates, plays a role in repairing DNA breaks. Stimulates the branch migration of RecA-mediated strand transfer reactions, allowing the 3' invading strand to extend heteroduplex DNA faster. Binds ssDNA in the presence of ADP but not other nucleotides, has ATPase activity that is stimulated by ssDNA and various branched DNA structures, but inhibited by SSB. Does not have RecA's homology-searching function. The protein is DNA repair protein RadA of Halalkalibacterium halodurans (strain ATCC BAA-125 / DSM 18197 / FERM 7344 / JCM 9153 / C-125) (Bacillus halodurans).